The chain runs to 148 residues: Nucleoside diphosphate kinase B (148 aa).

ATP contacts are provided by lysine 9, phenylalanine 57, arginine 85, threonine 91, arginine 102, and asparagine 112. Histidine 115 functions as the Pros-phosphohistidine intermediate in the catalytic mechanism.

It belongs to the NDK family. Requires Mg(2+) as cofactor.

It catalyses the reaction a 2'-deoxyribonucleoside 5'-diphosphate + ATP = a 2'-deoxyribonucleoside 5'-triphosphate + ADP. The enzyme catalyses a ribonucleoside 5'-diphosphate + ATP = a ribonucleoside 5'-triphosphate + ADP. Major role in the synthesis of nucleoside triphosphates other than ATP. The ATP gamma phosphate is transferred to the NDP beta phosphate via a ping-pong mechanism, using a phosphorylated active-site intermediate. In Flaveria bidentis (Coastal plain yellowtops), this protein is Nucleoside diphosphate kinase B.